A 432-amino-acid polypeptide reads, in one-letter code: Luc7-like protein 3 (432 aa).

Met1 is subject to N-acetylmethionine. 3 positions are modified to phosphoserine: Ser3, Ser110, and Ser115. A coiled-coil region spans residues 124 to 181; the sequence is KNEEKIQVLTDKIDVLLQQIEELGSEGKVEEAQGMMKLVEQLKEERELLRSTTSTIES. Lys231 bears the N6-acetyllysine mark. The segment covering 234-287 has biased composition (basic and acidic residues); it reads LRKRTEEPDRDERLKKEKQEREEREKEREREREERERKRRREEEEREKERARDR. The interval 234-432 is disordered; that stretch reads LRKRTEEPDR…IKSEGDTQSN (199 aa). The span at 288-301 shows a compositional bias: basic residues; it reads ERRKRSRSRSRHSS. Over residues 302–311 the composition is skewed to basic and acidic residues; sequence RTSDRRCSRS. Basic residues predominate over residues 312 to 367; the sequence is RDHKRSRSRERRRSRSRDRRRSRSHDRSERKHRSRSRDRRRSKSRDRKSYKHRSKS. The segment covering 368-414 has biased composition (basic and acidic residues); that stretch reads RDREQDRKSKEKEKRGSDDKKSSVKSSSREKQSEDTNTESKESDTKN. Ser420 is subject to Phosphoserine. A compositionally biased stretch (basic and acidic residues) spans 421-432; that stretch reads EDIKSEGDTQSN. Lys424 is covalently cross-linked (Glycyl lysine isopeptide (Lys-Gly) (interchain with G-Cter in SUMO1); alternate). Lys424 is covalently cross-linked (Glycyl lysine isopeptide (Lys-Gly) (interchain with G-Cter in SUMO2); alternate). A phosphoserine mark is found at Ser425 and Ser431.

It belongs to the Luc7 family. In terms of assembly, may interact with SFRS1 and form homodimers. Interacts with JMJD6. Interacts with RBM25. Interacts with RSRC1 (via Arg/Ser-rich domain). Interacts with RRP1B.

The protein resides in the nucleus speckle. Binds cAMP regulatory element DNA sequence. May play a role in RNA splicing. The polypeptide is Luc7-like protein 3 (LUC7L3) (Bos taurus (Bovine)).